The primary structure comprises 89 residues: Large ribosomal subunit protein bL27 (89 aa).

The disordered stretch occupies residues 1–21 (MAHKKAGGSSRNGRDSAGRRL).

Belongs to the bacterial ribosomal protein bL27 family.

In Erythrobacter litoralis (strain HTCC2594), this protein is Large ribosomal subunit protein bL27.